The primary structure comprises 408 residues: NADH-quinone oxidoreductase subunit D (408 aa).

Belongs to the complex I 49 kDa subunit family. NDH-1 is composed of 14 different subunits. Subunits NuoB, C, D, E, F, and G constitute the peripheral sector of the complex.

It is found in the cell inner membrane. The catalysed reaction is a quinone + NADH + 5 H(+)(in) = a quinol + NAD(+) + 4 H(+)(out). NDH-1 shuttles electrons from NADH, via FMN and iron-sulfur (Fe-S) centers, to quinones in the respiratory chain. The immediate electron acceptor for the enzyme in this species is believed to be ubiquinone. Couples the redox reaction to proton translocation (for every two electrons transferred, four hydrogen ions are translocated across the cytoplasmic membrane), and thus conserves the redox energy in a proton gradient. This Campylobacter jejuni subsp. jejuni serotype O:23/36 (strain 81-176) protein is NADH-quinone oxidoreductase subunit D.